The following is a 210-amino-acid chain: Dof zinc finger protein DOF4.4 (210 aa).

The segment at 24 to 78 (RVCPRCDSDNTKFCFYNNYSESQPRYFCKNCRRYWTHGGALRNIPVGGSCRKPKR) adopts a Dof-type zinc-finger fold. Zn(2+)-binding residues include Cys26, Cys29, Cys51, and Cys54.

It is found in the nucleus. Transcription factor that binds specifically to a 5'-AA[AG]G-3' consensus core sequence. In Arabidopsis thaliana (Mouse-ear cress), this protein is Dof zinc finger protein DOF4.4 (DOF4.4).